The chain runs to 429 residues: Glutamate-1-semialdehyde 2,1-aminomutase 1 (429 aa).

Lys-268 carries the N6-(pyridoxal phosphate)lysine modification.

This sequence belongs to the class-III pyridoxal-phosphate-dependent aminotransferase family. HemL subfamily. Homodimer. Pyridoxal 5'-phosphate is required as a cofactor.

The protein resides in the cytoplasm. The catalysed reaction is (S)-4-amino-5-oxopentanoate = 5-aminolevulinate. It participates in porphyrin-containing compound metabolism; protoporphyrin-IX biosynthesis; 5-aminolevulinate from L-glutamyl-tRNA(Glu): step 2/2. The chain is Glutamate-1-semialdehyde 2,1-aminomutase 1 from Listeria monocytogenes serotype 4b (strain F2365).